The primary structure comprises 386 residues: Zinc transporter 7-A (386 aa).

Residues Met1–Asn37 lie on the Cytoplasmic side of the membrane. Residues Leu38–Trp58 traverse the membrane as a helical segment. Over Ser59–Asp67 the chain is Lumenal. The chain crosses the membrane as a helical span at residues Ser68–Ser88. Residues Arg89–Arg102 are Cytoplasmic-facing. Residues Ala103–Phe123 traverse the membrane as a helical segment. Over Ser124–Arg140 the chain is Lumenal. The helical transmembrane segment at Leu141–His161 threads the bilayer. The segment at His161–His222 is his-rich loop. The Cytoplasmic portion of the chain corresponds to Gly162–Gly246. Residues His167–Ser239 are disordered. Positions Cys228–Gly238 are enriched in basic and acidic residues. The chain crosses the membrane as a helical span at residues Val247–Leu267. Residues Met268–Gly272 lie on the Lumenal side of the membrane. Residues Leu273–Ile293 form a helical membrane-spanning segment. Over Pro294–Ile386 the chain is Cytoplasmic.

The protein belongs to the cation diffusion facilitator (CDF) transporter (TC 2.A.4) family. SLC30A subfamily. Homooligomer.

It localises to the golgi apparatus membrane. It is found in the cytoplasmic vesicle. Its subcellular location is the golgi apparatus. The protein resides in the trans-Golgi network. The protein localises to the sarcoplasmic reticulum. It localises to the mitochondrion. It carries out the reaction Zn(2+)(in) = Zn(2+)(out). Zinc ion transporter mediating zinc entry from the cytosol into the lumen of organelles along the secretory pathway. By contributing to zinc ion homeostasis within the early secretory pathway, regulates the activation and folding of enzymes like alkaline phosphatases. The protein is Zinc transporter 7-A (slc30a7-a) of Xenopus laevis (African clawed frog).